Reading from the N-terminus, the 207-residue chain is Guanylate kinase (207 aa).

The 179-residue stretch at 5–183 (GTLYIISAPS…ALYELEAIVE (179 aa)) folds into the Guanylate kinase-like domain. 12 to 19 (APSGAGKT) is a binding site for ATP.

This sequence belongs to the guanylate kinase family.

It localises to the cytoplasm. The catalysed reaction is GMP + ATP = GDP + ADP. Functionally, essential for recycling GMP and indirectly, cGMP. The polypeptide is Guanylate kinase (Alcanivorax borkumensis (strain ATCC 700651 / DSM 11573 / NCIMB 13689 / SK2)).